The sequence spans 239 residues: 7-cyano-7-deazaguanine synthase (239 aa).

ATP is bound at residue 8–18; it reads LSGGLDSPTVL. 4 residues coordinate Zn(2+): Cys-188, Cys-196, Cys-199, and Cys-202.

Belongs to the QueC family. Requires Zn(2+) as cofactor.

The enzyme catalyses 7-carboxy-7-deazaguanine + NH4(+) + ATP = 7-cyano-7-deazaguanine + ADP + phosphate + H2O + H(+). The protein operates within purine metabolism; 7-cyano-7-deazaguanine biosynthesis. In terms of biological role, catalyzes the ATP-dependent conversion of 7-carboxy-7-deazaguanine (CDG) to 7-cyano-7-deazaguanine (preQ(0)). This Picrophilus torridus (strain ATCC 700027 / DSM 9790 / JCM 10055 / NBRC 100828 / KAW 2/3) protein is 7-cyano-7-deazaguanine synthase.